The primary structure comprises 303 residues: Mesenteric estrogen-dependent adipogenesis protein (303 aa).

Its subcellular location is the cytoplasm. Its function is as follows. Involved in processes that promote adipocyte differentiation, lipid accumulation, and glucose uptake in mature adipocytes. This is Mesenteric estrogen-dependent adipogenesis protein (MEDAG) from Bos taurus (Bovine).